Reading from the N-terminus, the 362-residue chain is Very-long-chain (3R)-3-hydroxyacyl-CoA dehydratase 3 (362 aa).

Methionine 1 carries the post-translational modification N-acetylmethionine. The Cytoplasmic portion of the chain corresponds to 1-149; that stretch reads MENQVLTPHV…ETLTNLRKGY (149 aa). Positions 5 to 94 constitute a CS domain; that stretch reads VLTPHVYWAQ…KVSQWWERLT (90 aa). Phosphothreonine is present on threonine 7. A coiled-coil region spans residues 111–136; sequence LDESDAEMELRAKEEERLNKLRLESE. Phosphoserine is present on residues serine 114 and serine 135. Residues 150–170 traverse the membrane as a helical segment; sequence LFMYNLVQFLGFSWIFVNLTV. The Lumenal segment spans residues 171-185; the sequence is RFCILGKESFYDTFH. Residues 186–207 traverse the membrane as a helical segment; sequence TVADMMYFCQMLAVVETINAAI. Topologically, residues 208 to 217 are cytoplasmic; sequence GVTTSPVLPS. A helical membrane pass occupies residues 218 to 235; it reads LIQLLGRNFILFIIFGTM. At 236–241 the chain is on the lumenal side; it reads EEMQNK. A helical membrane pass occupies residues 242–256; sequence AVVFFVFYLWSAIEI. At 257-279 the chain is on the cytoplasmic side; the sequence is FRYSFYMLTCIDMDWKVLTWLRY. A helical membrane pass occupies residues 280–298; it reads TLWIPLYPLGCLAEAVSVI. Catalysis depends on residues tyrosine 286 and glutamate 293. Topologically, residues 299–322 are lumenal; the sequence is QSIPIFNETGRFSFTLPYPVKIKV. A helical transmembrane segment spans residues 323–343; sequence RFSFFLQIYLIMIFLGLYINF. Topologically, residues 344-362 are cytoplasmic; the sequence is RHLYKQRRRRYGQKKKKIH.

Belongs to the very long-chain fatty acids dehydratase HACD family. As to quaternary structure, may interact with enzymes of the ELO family (including ELOVL1); with those enzymes that mediate condensation, the first of the four steps of the reaction cycle responsible for fatty acids elongation, may be part of a larger fatty acids elongase complex. Interacts with RAC1. Associates with internalized insulin receptor/INSR complexes on Golgi/endosomal membranes; HACD3/PTPLAD1 together with ATIC and PRKAA2/AMPK2 is proposed to be part of a signaling network regulating INSR autophosphorylation and endocytosis. Highly expressed in testis, kidney, brain, liver and weakly in skeletal muscle, spleen and heart. No expression detected in leukocytes.

It localises to the endoplasmic reticulum membrane. The enzyme catalyses a very-long-chain (3R)-3-hydroxyacyl-CoA = a very-long-chain (2E)-enoyl-CoA + H2O. It carries out the reaction (3R)-hydroxyhexadecanoyl-CoA = (2E)-hexadecenoyl-CoA + H2O. The protein operates within lipid metabolism; fatty acid biosynthesis. Functionally, catalyzes the third of the four reactions of the long-chain fatty acids elongation cycle. This endoplasmic reticulum-bound enzymatic process, allows the addition of two carbons to the chain of long- and very long-chain fatty acids/VLCFAs per cycle. This enzyme catalyzes the dehydration of the 3-hydroxyacyl-CoA intermediate into trans-2,3-enoyl-CoA, within each cycle of fatty acid elongation. Thereby, it participates in the production of VLCFAs of different chain lengths that are involved in multiple biological processes as precursors of membrane lipids and lipid mediators. May be involved in Rac1-signaling pathways leading to the modulation of gene expression. Promotes insulin receptor/INSR autophosphorylation and is involved in INSR internalization. The sequence is that of Very-long-chain (3R)-3-hydroxyacyl-CoA dehydratase 3 from Homo sapiens (Human).